Here is a 189-residue protein sequence, read N- to C-terminus: 3-isopropylmalate dehydratase small subunit (189 aa).

Belongs to the LeuD family. LeuD type 1 subfamily. As to quaternary structure, heterodimer of LeuC and LeuD.

It catalyses the reaction (2R,3S)-3-isopropylmalate = (2S)-2-isopropylmalate. It participates in amino-acid biosynthesis; L-leucine biosynthesis; L-leucine from 3-methyl-2-oxobutanoate: step 2/4. Catalyzes the isomerization between 2-isopropylmalate and 3-isopropylmalate, via the formation of 2-isopropylmaleate. This Francisella philomiragia subsp. philomiragia (strain ATCC 25017 / CCUG 19701 / FSC 153 / O#319-036) protein is 3-isopropylmalate dehydratase small subunit.